The chain runs to 156 residues: Ribonuclease H (156 aa).

The RNase H type-1 domain occupies 3–144; sequence ELKLIHIFTD…CDVLARTAAE (142 aa). Mg(2+) is bound by residues D12, E50, D72, and D136.

The protein belongs to the RNase H family. In terms of assembly, monomer. The cofactor is Mg(2+).

The protein localises to the cytoplasm. It carries out the reaction Endonucleolytic cleavage to 5'-phosphomonoester.. Endonuclease that specifically degrades the RNA of RNA-DNA hybrids. The sequence is that of Ribonuclease H from Shewanella baltica (strain OS223).